The following is a 419-amino-acid chain: 3-isopropylmalate dehydratase large subunit (419 aa).

[4Fe-4S] cluster-binding residues include cysteine 300, cysteine 360, and cysteine 363.

It belongs to the aconitase/IPM isomerase family. LeuC type 2 subfamily. As to quaternary structure, heterodimer of LeuC and LeuD. It depends on [4Fe-4S] cluster as a cofactor.

The catalysed reaction is (2R,3S)-3-isopropylmalate = (2S)-2-isopropylmalate. Its pathway is amino-acid biosynthesis; L-leucine biosynthesis; L-leucine from 3-methyl-2-oxobutanoate: step 2/4. Its function is as follows. Catalyzes the isomerization between 2-isopropylmalate and 3-isopropylmalate, via the formation of 2-isopropylmaleate. In Clostridium botulinum (strain Alaska E43 / Type E3), this protein is 3-isopropylmalate dehydratase large subunit.